A 138-amino-acid polypeptide reads, in one-letter code: Regulator of ribonuclease activity B (138 aa).

Residues 111–138 (WGTYFEDPNGEEGDDDDYVDEDDDGVRH) are disordered. Residues 118–138 (PNGEEGDDDDYVDEDDDGVRH) are compositionally biased toward acidic residues.

It belongs to the RraB family. Interacts with the C-terminal region of Rne.

It is found in the cytoplasm. Globally modulates RNA abundance by binding to RNase E (Rne) and regulating its endonucleolytic activity. Can modulate Rne action in a substrate-dependent manner by altering the composition of the degradosome. The sequence is that of Regulator of ribonuclease activity B from Salmonella typhi.